A 620-amino-acid polypeptide reads, in one-letter code: MDSHTLIQALIYLGSAALIVPIAVRLGLGSVLGYLIAGCIIGPWGLRLVTDAESILHFAEIGVVLMLFIIGLELDPQRLWKLRAAVFGGGALQMVICGGLLGLFCMLLGLRWQVAELIGMTLALSSTAIAMQAMNERNLMVTQMGRSAFAVLLFQDIAAIPLVAMIPLLAASNASTTMGAFALSALKVAGALVLVVLLGRYVTRPALRFVARSGLREVFSAVALFLVFGFGLLLEEVGLSMAMGAFLAGVLLASSEYRHALESDIEPFKGLLLGLFFIGVGMSIDFGTLLENPLRIVILLLGFLIIKIAMLWLIARPLQVPNKQRRWFAVLLGQGSEFAFVVFGAAQMANVLEPEWAKSLTLAVALSMAATPILLVILNRLEQSSTEEAREADEIDEEQPRVIIAGFGRFGQITGRLLLSSGVKMVVLDHDPDHIETLRKFGMKVFYGDATRMDLLESAGAAKAEVLINAIDDPQTNLQLTEMVKEHFPHLQIIARARDVDHYIRLRQAGVEKPERETFEGALKTGRLALESLGLGPYEARERADVFRRFNIQMVEEMAMVENDTKARAAVYKRTSAMLSEIITEDREHLSLIQRHGWQGTEEGKHTGNMADEPETKPSS.

12 helical membrane-spanning segments follow: residues 4-24 (HTLI…PIAV), 26-46 (LGLG…PWGL), 54-74 (SILH…GLEL), 90-110 (GALQ…LLGL), 114-134 (VAEL…MQAM), 149-169 (FAVL…IPLL), 178-198 (MGAF…VVLL), 218-238 (VFSA…EEVG), 270-290 (GLLL…GTLL), 294-314 (LRIV…LWLI), 327-347 (WFAV…GAAQ), and 359-379 (SLTL…VILN). The RCK N-terminal domain occupies 399-518 (QPRVIIAGFG…AGVEKPERET (120 aa)). The segment at 597–620 (GWQGTEEGKHTGNMADEPETKPSS) is disordered.

The protein belongs to the monovalent cation:proton antiporter 2 (CPA2) transporter (TC 2.A.37) family. KefC subfamily. In terms of assembly, homodimer. Interacts with the regulatory subunit KefF.

The protein resides in the cell inner membrane. In terms of biological role, pore-forming subunit of a potassium efflux system that confers protection against electrophiles. Catalyzes K(+)/H(+) antiport. This is Glutathione-regulated potassium-efflux system protein KefC from Escherichia coli O6:K15:H31 (strain 536 / UPEC).